The following is a 367-amino-acid chain: Alanine racemase (367 aa).

Lys-40 (proton acceptor; specific for D-alanine) is an active-site residue. N6-(pyridoxal phosphate)lysine is present on Lys-40. Residue Arg-136 coordinates substrate. The active-site Proton acceptor; specific for L-alanine is the Tyr-263. Substrate is bound at residue Met-310.

It belongs to the alanine racemase family. Pyridoxal 5'-phosphate is required as a cofactor.

It catalyses the reaction L-alanine = D-alanine. Its pathway is amino-acid biosynthesis; D-alanine biosynthesis; D-alanine from L-alanine: step 1/1. Functionally, catalyzes the interconversion of L-alanine and D-alanine. May also act on other amino acids. In Streptococcus pneumoniae serotype 19F (strain G54), this protein is Alanine racemase (alr).